The chain runs to 154 residues: MKRSGILNQPLSNILASFGHTDLLVVCDAGFPIPRDAQRVDLAIAPDLPDLRTVLSLINEEFITEKVVIAEEMAEFNPPLHGWLQKHFSGVEFERRPHEEMLTQVATSAKAIVRTGAFDPWGNIGLVSGVDVERFFAKEGTVLPDYYRDRAGEA.

The active-site Proton donor is the histidine 20. Substrate contacts are provided by residues aspartate 28, histidine 98, and 121–123; that span reads WGN.

It belongs to the RbsD / FucU family. RbsD subfamily. In terms of assembly, homodecamer.

It is found in the cytoplasm. It carries out the reaction beta-D-ribopyranose = beta-D-ribofuranose. It participates in carbohydrate metabolism; D-ribose degradation; D-ribose 5-phosphate from beta-D-ribopyranose: step 1/2. Functionally, catalyzes the interconversion of beta-pyran and beta-furan forms of D-ribose. In Rubrobacter xylanophilus (strain DSM 9941 / JCM 11954 / NBRC 16129 / PRD-1), this protein is D-ribose pyranase 2.